The following is an 89-amino-acid chain: Cornifin (89 aa).

The tract at residues 1–29 is disordered; it reads MSSQQQKQPCTPPPQLQQQQVKQPCQPPP. At Ser-2 the chain carries N-acetylserine. 8 tandem repeats follow at residues 3–14, 18–29, 31–38, 39–46, 47–54, 55–62, 63–70, and 71–78. Residues 3 to 29 are 2 X 12 AA approximate repeats; that stretch reads SQQQKQPCTPPPQLQQQQVKQPCQPPP. Residues 31 to 78 form a 6 X 8 AA approximate tandem repeats region; the sequence is EPCIPKTKEPCLPKVPEPCHPKVPEPCQPKVPEPCHPKVPEPCPSTVT. Residues 68 to 89 are disordered; the sequence is KVPEPCPSTVTPAPAQQKTKQK. A compositionally biased stretch (polar residues) spans 75–89; the sequence is STVTPAPAQQKTKQK.

Belongs to the cornifin (SPRR) family.

It localises to the cytoplasm. Its function is as follows. Cross-linked envelope protein of keratinocytes. It is a keratinocyte protein that first appears in the cell cytosol, but ultimately becomes cross-linked to membrane proteins by transglutaminase. All that results in the formation of an insoluble envelope beneath the plasma membrane. The protein is Cornifin (SPRR1) of Macaca mulatta (Rhesus macaque).